The sequence spans 147 residues: Hemoglobin subunit beta (147 aa).

V2 carries the post-translational modification N-acetylvaline. The Globin domain maps to H3–H147. T13 bears the Phosphothreonine mark. Residue S45 is modified to Phosphoserine. N6-acetyllysine is present on K60. A heme b-binding site is contributed by H64. N6-acetyllysine is present on K83. Heme b is bound at residue H93. C94 carries the S-nitrosocysteine modification. K145 is modified (N6-acetyllysine).

This sequence belongs to the globin family. As to quaternary structure, heterotetramer of two alpha chains and two beta chains in adult hemoglobin A (HbA). Red blood cells.

In terms of biological role, involved in oxygen transport from the lung to the various peripheral tissues. This chain is Hemoglobin subunit beta (HBB), found in Pan paniscus (Pygmy chimpanzee).